We begin with the raw amino-acid sequence, 454 residues long: Cobyrinate a,c-diamide synthase (454 aa).

One can recognise a GATase cobBQ-type domain in the interval 244–435; it reads KIAVAYDSAF…VHIHFLSNIA (192 aa). Cys327 acts as the Nucleophile in catalysis.

The protein belongs to the CobB/CbiA family. Requires Mg(2+) as cofactor.

It catalyses the reaction cob(II)yrinate + 2 L-glutamine + 2 ATP + 2 H2O = cob(II)yrinate a,c diamide + 2 L-glutamate + 2 ADP + 2 phosphate + 2 H(+). The protein operates within cofactor biosynthesis; adenosylcobalamin biosynthesis; cob(II)yrinate a,c-diamide from sirohydrochlorin (anaerobic route): step 10/10. In terms of biological role, catalyzes the ATP-dependent amidation of the two carboxylate groups at positions a and c of cobyrinate, using either L-glutamine or ammonia as the nitrogen source. In Thermoplasma volcanium (strain ATCC 51530 / DSM 4299 / JCM 9571 / NBRC 15438 / GSS1), this protein is Cobyrinate a,c-diamide synthase.